A 111-amino-acid polypeptide reads, in one-letter code: uncharacterized protein (111 aa).

Helical transmembrane passes span 27-47 (IIVL…GYKF) and 80-100 (IFTG…ISAI).

Its subcellular location is the membrane. This is an uncharacterized protein from Acanthamoeba polyphaga (Amoeba).